A 360-amino-acid chain; its full sequence is DNA replication and repair protein RecF (360 aa).

G33–T40 is an ATP binding site.

It belongs to the RecF family.

Its subcellular location is the cytoplasm. Functionally, the RecF protein is involved in DNA metabolism; it is required for DNA replication and normal SOS inducibility. RecF binds preferentially to single-stranded, linear DNA. It also seems to bind ATP. In Rickettsia typhi (strain ATCC VR-144 / Wilmington), this protein is DNA replication and repair protein RecF.